The chain runs to 251 residues: Precorrin-4 C(11)-methyltransferase (251 aa).

The protein belongs to the precorrin methyltransferase family.

The catalysed reaction is precorrin-4 + S-adenosyl-L-methionine = precorrin-5 + S-adenosyl-L-homocysteine. It functions in the pathway cofactor biosynthesis; adenosylcobalamin biosynthesis; cob(II)yrinate a,c-diamide from precorrin-2 (aerobic route): step 4/10. Catalyzes the methylation of C-11 in precorrin-4 to form precorrin-5. The sequence is that of Precorrin-4 C(11)-methyltransferase (cobM) from Mycobacterium tuberculosis (strain CDC 1551 / Oshkosh).